The chain runs to 957 residues: Outer kinetochore KNL1 complex subunit knl-1 (957 aa).

Residues 87–90 form repeat 1; it reads MDIT. Positions 87–393 are 8 X 4 AA repeats of M-[D/E]-[I/L/M]-[S/T]; sequence MDITGLNSTP…NFDDVAMDIT (307 aa). Residues 89 to 111 form a disordered region; it reads ITGLNSTPVTPKTQTPFNGSMDM. Over residues 91–106 the composition is skewed to polar residues; sequence GLNSTPVTPKTQTPFN. 7 tandem repeats follow at residues 109–112, 206–209, 251–254, 282–285, 326–329, 367–370, and 390–393. Residues 476 to 504 are disordered; it reads SLQQSSMRMSTTITEDVTASKNPESSTIS. Residues 830-950 are a coiled coil; the sequence is KFAKESNVEI…RKKKEEMVER (121 aa).

Component of the KNL1 complex composed of knl-1 and kbp-5. Part of the ten-subunit outer kinetochore KMN network that includes the KNL1, MIS12 and NDC80 complexes. Interacts with the protein phosphatase 1 (PP1) catalytic subunit gsp-1; the interaction is direct. Interacts with the protein phosphatase 1 (PP1) catalytic subunit gsp-2; the interaction is direct. Interacts with the MIS12 complex subunits kbp-1, kbp-2 and mis-12. Interacts with the NDC80 complex components ndc-80 and him-10. Interacts with knl-3. Interacts with kbp-3. Interacts with kbp-4. Interacts with kbp-5.

The protein localises to the cytoplasm. It is found in the cell cortex. Its subcellular location is the chromosome. The protein resides in the centromere. It localises to the kinetochore. In terms of biological role, acts as a component of the outer kinetochore KNL1 complex that serves as a docking point for spindle assembly checkpoint components and mediates microtubule-kinetochore interactions. Kinetochores, consisting of a centromere-associated inner segment and a microtubule-contacting outer segment, play a crucial role in chromosome segregation by mediating the physical connection between centromeric DNA and spindle microtubules. The outer kinetochore is made up of the ten-subunit KMN network, comprising the MIS12, NDC80 and KNL1 complexes, and auxiliary microtubule-associated components; together they connect the outer kinetochore with the inner kinetochore, bind microtubules, and mediate interactions with mitotic checkpoint proteins that delay anaphase until chromosomes are bioriented on the spindle. Binds the protein phosphatase 1 catalytic subunits gsp-1 and gsp-2, which has a role in delaying formation of load-bearing kinetochore-microtubule attachments. Required for the recruitment of spindle-assembly checkpoint components bub-1 and mdf-1/2 to unattached kinetochores. Binds microtubules which plays a role in silencing of the spindle assembly checkpoint, but not the formation of load-bearing microtubule-kinetochore attachments. Has a role in the correct localization of the spindly-like protein spdl-1 and the RZZ complex that is composed of rod-1, czw-1 and zwl-1 to kinetochores. The sequence is that of Outer kinetochore KNL1 complex subunit knl-1 from Caenorhabditis briggsae.